A 503-amino-acid polypeptide reads, in one-letter code: Trehalose-6-phosphate synthase (503 aa).

A D-glucose 6-phosphate-binding site is contributed by arginine 22. Residue 42–43 coordinates UDP-alpha-D-glucose; that stretch reads GG. Positions 94 and 148 each coordinate D-glucose 6-phosphate. Residues arginine 290 and lysine 295 each contribute to the UDP-alpha-D-glucose site. Arginine 328 contributes to the D-glucose 6-phosphate binding site. Residue 393–397 coordinates UDP-alpha-D-glucose; the sequence is LVAKE. The interval 481-503 is disordered; it reads GETGDSGVTGESTPAPESDSGSF.

Belongs to the glycosyltransferase 20 family. Homotetramer.

The enzyme catalyses ADP-alpha-D-glucose + D-glucose 6-phosphate = alpha,alpha-trehalose 6-phosphate + ADP + H(+). It carries out the reaction CDP-alpha-D-glucose + D-glucose 6-phosphate = alpha,alpha-trehalose 6-phosphate + CDP + H(+). The catalysed reaction is GDP-alpha-D-glucose + D-glucose 6-phosphate = alpha,alpha-trehalose 6-phosphate + GDP + H(+). It catalyses the reaction TDP-alpha-D-glucose + D-glucose 6-phosphate = 5-methyl-UDP + alpha,alpha-trehalose 6-phosphate + H(+). The enzyme catalyses D-glucose 6-phosphate + UDP-alpha-D-glucose = alpha,alpha-trehalose 6-phosphate + UDP + H(+). The protein operates within glycan biosynthesis; trehalose biosynthesis. With respect to regulation, stimulated by the polynucleotide FII (physiological activator), and by chondroitin sulfate (CS) and heparin. Activation by the polyanion is inhibited by high salt concentration as well as by high concentrations of mononucleoside phosphates. In terms of biological role, involved in the production of glycogen and alpha-glucan via the TreS-Pep2 branch involved in the biosynthesis of maltose-1-phosphate (M1P), and probably in the osmoprotection via the biosynthesis of trehalose. Catalyzes the transfer of glucose from UDP-glucose (UDP-Glc) to glucose-6-phosphate (Glc-6-P) to form trehalose-6-phosphate. ADP-Glc, CDP-Glc, GDP-Glc and TDP-Glc are also glucosyl donors, however, when the pyrimidine sugar nucleotides (CDP-Glc, TDP-Glc and UDP-Glc) are used as substrates, there is an absolute requirement for a high molecular weight polyanion for activity. The protein is Trehalose-6-phosphate synthase of Mycolicibacterium smegmatis (strain ATCC 700084 / mc(2)155) (Mycobacterium smegmatis).